The following is a 356-amino-acid chain: N-methyltransferase 4 (356 aa).

Residues 93–94 (QS), 128–136 (ILDIGCGFG), and 155–160 (TNSAEQ) contribute to the S-adenosyl-L-methionine site.

This sequence belongs to the CFA/CMAS family. Expressed in stems, roots, flower buds and leaves.

In terms of biological role, probable N-methyltransferase not involved in benzylisoquinoline metabolism. Shows no detectable activity with (s)-coclaurine, (R)- or (S)-reticuline, papaverine or (R,S)-tetrahydropapaverine. The protein is N-methyltransferase 4 (NMT4) of Papaver somniferum (Opium poppy).